We begin with the raw amino-acid sequence, 560 residues long: Membrane protein insertase YidC (560 aa).

Transmembrane regions (helical) follow at residues I5–F25, A334–F354, Y357–F377, L431–I451, L476–L496, and F522–W542.

This sequence belongs to the OXA1/ALB3/YidC family. Type 1 subfamily. As to quaternary structure, interacts with the Sec translocase complex via SecD. Specifically interacts with transmembrane segments of nascent integral membrane proteins during membrane integration.

The protein localises to the cell inner membrane. Required for the insertion and/or proper folding and/or complex formation of integral membrane proteins into the membrane. Involved in integration of membrane proteins that insert both dependently and independently of the Sec translocase complex, as well as at least some lipoproteins. Aids folding of multispanning membrane proteins. In Rickettsia rickettsii (strain Iowa), this protein is Membrane protein insertase YidC.